Consider the following 492-residue polypeptide: GTPase Der (492 aa).

An EngA-type G 1 domain is found at 3–166; the sequence is PVIALVGRPN…AVLGIFPKDA (164 aa). GTP contacts are provided by residues 9–16, 56–60, and 118–121; these read GRPNVGKS, DTGGI, and NKVD. Positions 166-190 are disordered; sequence AGEPEEGAEAEEEVQEGQEAKRIPG. A compositionally biased stretch (acidic residues) spans 168–181; that stretch reads EPEEGAEAEEEVQE. Positions 197–370 constitute an EngA-type G 2 domain; it reads IKLAIIGRPN…SVQAAFHSAV (174 aa). Residues 203-210, 250-254, and 315-318 contribute to the GTP site; these read GRPNVGKS, DTAGV, and NKWD. One can recognise a KH-like domain in the interval 371 to 455; that stretch reads TRWPTSRLTQ…PIRIEYKGGE (85 aa). The tract at residues 453-492 is disordered; sequence GGENPYEGNKNKLTDRQVNKKRRLMSHHKKAEKKRKDKRK. Residues 461 to 470 are compositionally biased toward basic and acidic residues; the sequence is NKNKLTDRQV. The segment covering 471–492 has biased composition (basic residues); the sequence is NKKRRLMSHHKKAEKKRKDKRK.

The protein belongs to the TRAFAC class TrmE-Era-EngA-EngB-Septin-like GTPase superfamily. EngA (Der) GTPase family. Associates with the 50S ribosomal subunit.

GTPase that plays an essential role in the late steps of ribosome biogenesis. The polypeptide is GTPase Der (Ectopseudomonas mendocina (strain ymp) (Pseudomonas mendocina)).